Reading from the N-terminus, the 168-residue chain is uncharacterized protein (168 aa).

Transmembrane regions (helical) follow at residues 27–47 (NWLVILVFYFLAFGSIMRISG) and 147–167 (IENGILLCQVLQALIIVQVMF).

It is found in the membrane. This is an uncharacterized protein from Saccharomyces cerevisiae (strain ATCC 204508 / S288c) (Baker's yeast).